Reading from the N-terminus, the 109-residue chain is Thiosulfate sulfurtransferase GlpE (109 aa).

Residues 16–104 (RSNGAVVVDI…WRATFPSETA (89 aa)) enclose the Rhodanese domain. The active-site Cysteine persulfide intermediate is the Cys-64.

The protein belongs to the GlpE family.

It is found in the cytoplasm. The enzyme catalyses thiosulfate + hydrogen cyanide = thiocyanate + sulfite + 2 H(+). It catalyses the reaction thiosulfate + [thioredoxin]-dithiol = [thioredoxin]-disulfide + hydrogen sulfide + sulfite + 2 H(+). Transferase that catalyzes the transfer of sulfur from thiosulfate to thiophilic acceptors such as cyanide or dithiols. May function in a CysM-independent thiosulfate assimilation pathway by catalyzing the conversion of thiosulfate to sulfite, which can then be used for L-cysteine biosynthesis. The sequence is that of Thiosulfate sulfurtransferase GlpE from Ectopseudomonas mendocina (strain ymp) (Pseudomonas mendocina).